The chain runs to 279 residues: Small ribosomal subunit protein uS9m (279 aa).

Belongs to the universal ribosomal protein uS9 family.

It is found in the mitochondrion. The protein is Small ribosomal subunit protein uS9m (MRPS9) of Eremothecium gossypii (strain ATCC 10895 / CBS 109.51 / FGSC 9923 / NRRL Y-1056) (Yeast).